The chain runs to 80 residues: Dermaseptin-DA3 (80 aa).

The signal sequence occupies residues 1–22 (MAFLKKSLFLVLFLGLVSLSIC). Residues 23-42 (EEKRENEDEEEQEDDEQSEE) constitute a propeptide that is removed on maturation. Residues 24–48 (EKRENEDEEEQEDDEQSEEKRGMWS) are disordered. The segment covering 29 to 40 (EDEEEQEDDEQS) has biased composition (acidic residues). Leucine 77 bears the Leucine amide mark. Residues 79–80 (EQ) constitute a propeptide that is removed on maturation.

This sequence belongs to the frog skin active peptide (FSAP) family. Dermaseptin subfamily. In terms of tissue distribution, expressed by the skin glands.

Its subcellular location is the secreted. Possesses a potent antimicrobial activity against Gram-positive and Gram-negative bacteria. Probably acts by disturbing membrane functions with its amphipathic structure. This chain is Dermaseptin-DA3, found in Agalychnis dacnicolor (Giant Mexican leaf frog).